The following is a 351-amino-acid chain: Phosphoribosylformylglycinamidine cyclo-ligase (351 aa).

This sequence belongs to the AIR synthase family.

It localises to the cytoplasm. The enzyme catalyses 2-formamido-N(1)-(5-O-phospho-beta-D-ribosyl)acetamidine + ATP = 5-amino-1-(5-phospho-beta-D-ribosyl)imidazole + ADP + phosphate + H(+). The protein operates within purine metabolism; IMP biosynthesis via de novo pathway; 5-amino-1-(5-phospho-D-ribosyl)imidazole from N(2)-formyl-N(1)-(5-phospho-D-ribosyl)glycinamide: step 2/2. This is Phosphoribosylformylglycinamidine cyclo-ligase from Xylella fastidiosa (strain Temecula1 / ATCC 700964).